Consider the following 78-residue polypeptide: Large ribosomal subunit protein bL28 (78 aa).

It belongs to the bacterial ribosomal protein bL28 family.

This chain is Large ribosomal subunit protein bL28, found in Legionella pneumophila (strain Paris).